A 389-amino-acid chain; its full sequence is Flap endonuclease 1 (389 aa).

Residues 1–105 (MGIKGLTALM…GELAKRKDKR (105 aa)) form an N-domain region. Residue Asp-34 coordinates Mg(2+). DNA is bound at residue Arg-71. Residues Asp-87, Glu-159, Glu-161, Asp-180, and Asp-182 each coordinate Mg(2+). The segment at 123-254 (EVEKLSKRTV…KTALKLIKEH (132 aa)) is I-domain. Residue Glu-159 coordinates DNA. 2 residues coordinate DNA: Gly-232 and Asp-234. Residue Asp-234 coordinates Mg(2+). The interval 338–346 (SQNRLESFF) is interaction with PCNA. The disordered stretch occupies residues 356 to 389 (IGKRKVEEKKGKNGKAGLANKKSKGVSGFRRSKN).

This sequence belongs to the XPG/RAD2 endonuclease family. FEN1 subfamily. As to quaternary structure, interacts with PCNA. Three molecules of FEN1 bind to one PCNA trimer with each molecule binding to one PCNA monomer. PCNA stimulates the nuclease activity without altering cleavage specificity. The cofactor is Mg(2+). Phosphorylated. Phosphorylation upon DNA damage induces relocalization to the nuclear plasma.

It is found in the nucleus. The protein resides in the nucleolus. It localises to the nucleoplasm. Its subcellular location is the mitochondrion. Structure-specific nuclease with 5'-flap endonuclease and 5'-3' exonuclease activities involved in DNA replication and repair. During DNA replication, cleaves the 5'-overhanging flap structure that is generated by displacement synthesis when DNA polymerase encounters the 5'-end of a downstream Okazaki fragment. It enters the flap from the 5'-end and then tracks to cleave the flap base, leaving a nick for ligation. Also involved in the long patch base excision repair (LP-BER) pathway, by cleaving within the apurinic/apyrimidinic (AP) site-terminated flap. Acts as a genome stabilization factor that prevents flaps from equilibrating into structures that lead to duplications and deletions. Also possesses 5'-3' exonuclease activity on nicked or gapped double-stranded DNA, and exhibits RNase H activity. Also involved in replication and repair of rDNA and in repairing mitochondrial DNA. The chain is Flap endonuclease 1 from Ostreococcus lucimarinus (strain CCE9901).